Consider the following 56-residue polypeptide: Small ribosomal subunit protein uS14 (56 aa).

Zn(2+) is bound by residues Cys21, Cys24, Cys39, and Cys42.

It belongs to the universal ribosomal protein uS14 family. As to quaternary structure, component of the 40S small ribosomal subunit. The cofactor is Zn(2+).

The protein localises to the cytoplasm. It is found in the cytosol. It localises to the rough endoplasmic reticulum. The protein is Small ribosomal subunit protein uS14 (RpS29) of Plutella xylostella (Diamondback moth).